The following is a 342-amino-acid chain: Probable deoxyhypusine synthase (342 aa).

K307 functions as the Nucleophile in the catalytic mechanism.

Belongs to the deoxyhypusine synthase family. NAD(+) serves as cofactor.

The enzyme catalyses [eIF5A protein]-L-lysine + spermidine = [eIF5A protein]-deoxyhypusine + propane-1,3-diamine. Its pathway is protein modification; eIF5A hypusination. In terms of biological role, catalyzes the NAD-dependent oxidative cleavage of spermidine and the subsequent transfer of the butylamine moiety of spermidine to the epsilon-amino group of a specific lysine residue of the eIF-5A precursor protein to form the intermediate deoxyhypusine residue. The polypeptide is Probable deoxyhypusine synthase (dys) (Pyrococcus horikoshii (strain ATCC 700860 / DSM 12428 / JCM 9974 / NBRC 100139 / OT-3)).